Here is a 769-residue protein sequence, read N- to C-terminus: Major inner protein P1 (769 aa).

In terms of assembly, homodimer. Associates with the polymerase complex.

The protein resides in the virion. Functionally, P1 is the major inner capsid (core) protein of the polyhedral procapsid, which is responsible for genomic replication and transcription. Forms a dodecahedral shell from 60 asymmetric dimers. Binds to RNA and may be involved in genomic packaging. This Pseudomonas phage phi6 (Bacteriophage phi-6) protein is Major inner protein P1 (P1).